A 471-amino-acid polypeptide reads, in one-letter code: UDP-N-acetylmuramoylalanine--D-glutamate ligase (471 aa).

122 to 128 (GTNGKTT) provides a ligand contact to ATP.

It belongs to the MurCDEF family.

Its subcellular location is the cytoplasm. It catalyses the reaction UDP-N-acetyl-alpha-D-muramoyl-L-alanine + D-glutamate + ATP = UDP-N-acetyl-alpha-D-muramoyl-L-alanyl-D-glutamate + ADP + phosphate + H(+). It participates in cell wall biogenesis; peptidoglycan biosynthesis. Its function is as follows. Cell wall formation. Catalyzes the addition of glutamate to the nucleotide precursor UDP-N-acetylmuramoyl-L-alanine (UMA). This Streptomyces coelicolor (strain ATCC BAA-471 / A3(2) / M145) protein is UDP-N-acetylmuramoylalanine--D-glutamate ligase.